The primary structure comprises 517 residues: 3-hydroxyphenylacetate 6-hydroxylase (517 aa).

Cys449 contributes to the heme binding site.

The protein belongs to the cytochrome P450 family.

The catalysed reaction is 3-hydroxyphenylacetate + NADH + O2 + H(+) = homogentisate + NAD(+) + H2O. The enzyme catalyses 3-hydroxyphenylacetate + NADPH + O2 + H(+) = homogentisate + NADP(+) + H2O. It catalyses the reaction 3,4-dihydroxyphenylacetate + NADH + O2 + H(+) = 2,4,5-trihydroxyphenylacetate + NAD(+) + H2O. It carries out the reaction 3,4-dihydroxyphenylacetate + NADPH + O2 + H(+) = 2,4,5-trihydroxyphenylacetate + NADP(+) + H2O. The protein operates within aromatic compound metabolism; phenylacetate degradation. Catalyzes the hydroxylation of 3-hydroxyphenylacetate and 3,4-dihydroxyphenylacetate to 2,5-dihydroxyphenylacetate (homogentisate) and 2,4,5-trihydroxyphenylacetate, respectively. Both of these compounds are used as substrate by homogentisate dioxygenase in the homogentisate pathway. The homogentisate pathway is used to catabolize phenylacetate and use it as a carbon source. Can also catalyze the hydroxylation of phenylacetate to 2-hydroxyphenylacetate at low efficiency to compensate for loss of phacA. The chain is 3-hydroxyphenylacetate 6-hydroxylase (phacB) from Emericella nidulans (Aspergillus nidulans).